The sequence spans 344 residues: N-acetyl-gamma-glutamyl-phosphate reductase (344 aa).

Residue cysteine 147 is part of the active site.

The protein belongs to the NAGSA dehydrogenase family. Type 1 subfamily.

The protein resides in the cytoplasm. The enzyme catalyses N-acetyl-L-glutamate 5-semialdehyde + phosphate + NADP(+) = N-acetyl-L-glutamyl 5-phosphate + NADPH + H(+). The protein operates within amino-acid biosynthesis; L-arginine biosynthesis; N(2)-acetyl-L-ornithine from L-glutamate: step 3/4. Catalyzes the NADPH-dependent reduction of N-acetyl-5-glutamyl phosphate to yield N-acetyl-L-glutamate 5-semialdehyde. In Bacillus amyloliquefaciens (Bacillus velezensis), this protein is N-acetyl-gamma-glutamyl-phosphate reductase.